Here is a 298-residue protein sequence, read N- to C-terminus: Ribosomal RNA small subunit methyltransferase A (298 aa).

Residues asparagine 35, leucine 37, glycine 62, glutamate 83, aspartate 108, and asparagine 133 each coordinate S-adenosyl-L-methionine.

This sequence belongs to the class I-like SAM-binding methyltransferase superfamily. rRNA adenine N(6)-methyltransferase family. RsmA subfamily.

It localises to the cytoplasm. The enzyme catalyses adenosine(1518)/adenosine(1519) in 16S rRNA + 4 S-adenosyl-L-methionine = N(6)-dimethyladenosine(1518)/N(6)-dimethyladenosine(1519) in 16S rRNA + 4 S-adenosyl-L-homocysteine + 4 H(+). In terms of biological role, specifically dimethylates two adjacent adenosines (A1518 and A1519) in the loop of a conserved hairpin near the 3'-end of 16S rRNA in the 30S particle. May play a critical role in biogenesis of 30S subunits. The protein is Ribosomal RNA small subunit methyltransferase A of Streptococcus pyogenes serotype M12 (strain MGAS9429).